A 388-amino-acid polypeptide reads, in one-letter code: 4-hydroxy-3-methylbut-2-en-1-yl diphosphate synthase (flavodoxin) (388 aa).

Residues Cys281, Cys284, Cys316, and Glu323 each contribute to the [4Fe-4S] cluster site.

Belongs to the IspG family. Requires [4Fe-4S] cluster as cofactor.

The enzyme catalyses (2E)-4-hydroxy-3-methylbut-2-enyl diphosphate + oxidized [flavodoxin] + H2O + 2 H(+) = 2-C-methyl-D-erythritol 2,4-cyclic diphosphate + reduced [flavodoxin]. Its pathway is isoprenoid biosynthesis; isopentenyl diphosphate biosynthesis via DXP pathway; isopentenyl diphosphate from 1-deoxy-D-xylulose 5-phosphate: step 5/6. Converts 2C-methyl-D-erythritol 2,4-cyclodiphosphate (ME-2,4cPP) into 1-hydroxy-2-methyl-2-(E)-butenyl 4-diphosphate. The chain is 4-hydroxy-3-methylbut-2-en-1-yl diphosphate synthase (flavodoxin) from Pseudarthrobacter chlorophenolicus (strain ATCC 700700 / DSM 12829 / CIP 107037 / JCM 12360 / KCTC 9906 / NCIMB 13794 / A6) (Arthrobacter chlorophenolicus).